The chain runs to 309 residues: D-alanine--D-alanine ligase (309 aa).

Residues 105 to 304 (KQIWHSVGLP…FNDLVERILA (200 aa)) enclose the ATP-grasp domain. ATP is bound at residue 135-190 (LQELGGRVIVKPAREGSSIGMSIADNGRSLALALQHAAEFDDDLLVEQWVEGAEYT). Mg(2+)-binding residues include Asp258, Glu271, and Asn273.

The protein belongs to the D-alanine--D-alanine ligase family. Mg(2+) is required as a cofactor. Requires Mn(2+) as cofactor.

Its subcellular location is the cytoplasm. The catalysed reaction is 2 D-alanine + ATP = D-alanyl-D-alanine + ADP + phosphate + H(+). It participates in cell wall biogenesis; peptidoglycan biosynthesis. Its function is as follows. Cell wall formation. This is D-alanine--D-alanine ligase from Idiomarina loihiensis (strain ATCC BAA-735 / DSM 15497 / L2-TR).